A 902-amino-acid chain; its full sequence is Translation initiation factor IF-2 (902 aa).

Basic and acidic residues-rich tracts occupy residues 1–12 (MVDTKTPGDKKL) and 43–60 (VVEKRGKRRIGDGPEPHA). The interval 1-276 (MVDTKTPGDK…KPGPQKERGR (276 aa)) is disordered. A compositionally biased stretch (pro residues) spans 69–84 (PAAPAPSRPAPPPAPP). Residues 111–174 (AKLREVEERR…ETEAKKRFGE (64 aa)) show a composition bias toward basic and acidic residues. 2 stretches are compositionally biased toward low complexity: residues 181-190 (AARPATAAPA) and 198-237 (APAARPGTTTTRPGTTTARPATTTAQRPGAPAGRGPAVAA). Residues 398 to 567 (TRSPVVTVMG…MIALQADILD (170 aa)) form the tr-type G domain. The segment at 407-414 (GHVDHGKT) is G1. 407 to 414 (GHVDHGKT) contributes to the GTP binding site. The tract at residues 432–436 (GITQH) is G2. Positions 455–458 (DTPG) are G3. GTP-binding positions include 455–459 (DTPGH) and 509–512 (NKID). The segment at 509-512 (NKID) is G4. A G5 region spans residues 545 to 547 (SAK).

Belongs to the TRAFAC class translation factor GTPase superfamily. Classic translation factor GTPase family. IF-2 subfamily.

It is found in the cytoplasm. One of the essential components for the initiation of protein synthesis. Protects formylmethionyl-tRNA from spontaneous hydrolysis and promotes its binding to the 30S ribosomal subunits. Also involved in the hydrolysis of GTP during the formation of the 70S ribosomal complex. The polypeptide is Translation initiation factor IF-2 (Bradyrhizobium diazoefficiens (strain JCM 10833 / BCRC 13528 / IAM 13628 / NBRC 14792 / USDA 110)).